Consider the following 363-residue polypeptide: NAD(P)H-quinone oxidoreductase subunit 1, chloroplastic (363 aa).

7 helical membrane-spanning segments follow: residues 26–46 (IIWI…GVLV), 98–118 (FSIG…VIPF), 127–147 (LTIG…GLLM), 246–266 (TEYS…NLLV), 268–288 (SLFV…YIFV), 300–320 (VFGP…FLFI), and 336–356 (LLNL…LLTT).

This sequence belongs to the complex I subunit 1 family. NDH is composed of at least 16 different subunits, 5 of which are encoded in the nucleus.

The protein localises to the plastid. The protein resides in the chloroplast thylakoid membrane. The enzyme catalyses a plastoquinone + NADH + (n+1) H(+)(in) = a plastoquinol + NAD(+) + n H(+)(out). It catalyses the reaction a plastoquinone + NADPH + (n+1) H(+)(in) = a plastoquinol + NADP(+) + n H(+)(out). Its function is as follows. NDH shuttles electrons from NAD(P)H:plastoquinone, via FMN and iron-sulfur (Fe-S) centers, to quinones in the photosynthetic chain and possibly in a chloroplast respiratory chain. The immediate electron acceptor for the enzyme in this species is believed to be plastoquinone. Couples the redox reaction to proton translocation, and thus conserves the redox energy in a proton gradient. This is NAD(P)H-quinone oxidoreductase subunit 1, chloroplastic from Coffea arabica (Arabian coffee).